Here is a 636-residue protein sequence, read N- to C-terminus: 1-deoxy-D-xylulose-5-phosphate synthase (636 aa).

Thiamine diphosphate contacts are provided by residues H74 and 115–117; that span reads GHA. Mg(2+) is bound at residue D146. Thiamine diphosphate contacts are provided by residues 147–148, N175, Y285, and E368; that span reads GA. N175 lines the Mg(2+) pocket.

The protein belongs to the transketolase family. DXPS subfamily. Homodimer. The cofactor is Mg(2+). Thiamine diphosphate is required as a cofactor.

It catalyses the reaction D-glyceraldehyde 3-phosphate + pyruvate + H(+) = 1-deoxy-D-xylulose 5-phosphate + CO2. It functions in the pathway metabolic intermediate biosynthesis; 1-deoxy-D-xylulose 5-phosphate biosynthesis; 1-deoxy-D-xylulose 5-phosphate from D-glyceraldehyde 3-phosphate and pyruvate: step 1/1. In terms of biological role, catalyzes the acyloin condensation reaction between C atoms 2 and 3 of pyruvate and glyceraldehyde 3-phosphate to yield 1-deoxy-D-xylulose-5-phosphate (DXP). The chain is 1-deoxy-D-xylulose-5-phosphate synthase from Anaeromyxobacter sp. (strain K).